A 595-amino-acid polypeptide reads, in one-letter code: ATP-dependent lipid A-core flippase (595 aa).

The disordered stretch occupies residues 1–20 (MSQAYQPDSTKTSAKKSSAV). Over residues 9–19 (STKTSAKKSSA) the composition is skewed to low complexity. The next 4 membrane-spanning stretches (helical) occupy residues 41-61 (WWAI…EIWI), 81-101 (GLFP…SFLG), 169-189 (VIAL…ILFV), and 266-286 (INTP…VWLA). The 282-residue stretch at 45–326 (LLTITGFAIN…LTDVNQQLQR (282 aa)) folds into the ABC transmembrane type-1 domain. One can recognise an ABC transporter domain in the interval 357–592 (IKLDNISLVY…HGHYAQMYAR (236 aa)). 390–397 (GRSGAGKS) is a binding site for ATP.

This sequence belongs to the ABC transporter superfamily. Lipid exporter (TC 3.A.1.106) family. Homodimer.

The protein resides in the cell inner membrane. It catalyses the reaction ATP + H2O + lipid A-core oligosaccharideSide 1 = ADP + phosphate + lipid A-core oligosaccharideSide 2.. Functionally, involved in lipopolysaccharide (LPS) biosynthesis. Translocates lipid A-core from the inner to the outer leaflet of the inner membrane. Transmembrane domains (TMD) form a pore in the inner membrane and the ATP-binding domain (NBD) is responsible for energy generation. The sequence is that of ATP-dependent lipid A-core flippase from Psychrobacter arcticus (strain DSM 17307 / VKM B-2377 / 273-4).